Consider the following 347-residue polypeptide: DnaJ homolog subfamily C member 22 (347 aa).

The TM2 domain maps to 4–50; sequence GLLMTYTLWAVGGPAGLHHLYLGRDSHALLWMLTLGGGGLGWLWEFW. The next 7 membrane-spanning stretches (helical) occupy residues 5 to 25, 32 to 52, 81 to 101, 105 to 125, 135 to 155, 186 to 206, and 218 to 238; these read LLMT…HLYL, LLWM…FWML, FVAQ…SLSF, FYIV…AAVG, LGAA…ILPI, GLAY…HTAV, and FLSW…VLLL. One can recognise a J domain in the interval 277 to 347; it reads LALQVFGLSE…GSWRWEETSF (71 aa).

It is found in the membrane. Its function is as follows. May function as a co-chaperone. In Bos taurus (Bovine), this protein is DnaJ homolog subfamily C member 22 (DNAJC22).